We begin with the raw amino-acid sequence, 195 residues long: HTH-type transcriptional regulator BetI (195 aa).

Residues 8 to 68 (SIRRRQLIDA…ATMRDITSQL (61 aa)) form the HTH tetR-type domain. The H-T-H motif DNA-binding region spans 31–50 (TIAQIARRAGVSTGIISHYF).

It functions in the pathway amine and polyamine biosynthesis; betaine biosynthesis via choline pathway [regulation]. In terms of biological role, repressor involved in the biosynthesis of the osmoprotectant glycine betaine. It represses transcription of the choline transporter BetT and the genes of BetAB involved in the synthesis of glycine betaine. This is HTH-type transcriptional regulator BetI from Shigella flexneri serotype 5b (strain 8401).